A 1358-amino-acid chain; its full sequence is DNA-directed RNA polymerase subunit beta (1358 aa).

This sequence belongs to the RNA polymerase beta chain family. In terms of assembly, the RNAP catalytic core consists of 2 alpha, 1 beta, 1 beta' and 1 omega subunit. When a sigma factor is associated with the core the holoenzyme is formed, which can initiate transcription.

The enzyme catalyses RNA(n) + a ribonucleoside 5'-triphosphate = RNA(n+1) + diphosphate. Its function is as follows. DNA-dependent RNA polymerase catalyzes the transcription of DNA into RNA using the four ribonucleoside triphosphates as substrates. This chain is DNA-directed RNA polymerase subunit beta, found in Xanthobacter autotrophicus (strain ATCC BAA-1158 / Py2).